A 176-amino-acid chain; its full sequence is Translation initiation factor IF-3 (176 aa).

Belongs to the IF-3 family. Monomer.

It localises to the cytoplasm. IF-3 binds to the 30S ribosomal subunit and shifts the equilibrium between 70S ribosomes and their 50S and 30S subunits in favor of the free subunits, thus enhancing the availability of 30S subunits on which protein synthesis initiation begins. The protein is Translation initiation factor IF-3 of Streptococcus pyogenes serotype M4 (strain MGAS10750).